A 436-amino-acid polypeptide reads, in one-letter code: Adenylosuccinate synthetase (436 aa).

GTP is bound by residues 22–28 (GDEGKGK) and 50–52 (GHE). Asp-23 acts as the Proton acceptor in catalysis. Mg(2+) is bound by residues Asp-23 and Gly-50. IMP-binding positions include 23–26 (DEGK), 48–51 (NAGH), Thr-141, Arg-155, Asn-231, Thr-246, and Arg-310. His-51 functions as the Proton donor in the catalytic mechanism. 306–312 (VSTARVR) serves as a coordination point for substrate. GTP-binding positions include Arg-312, 338 to 340 (KMD), and 424 to 426 (GVG).

The protein belongs to the adenylosuccinate synthetase family. Homodimer. Requires Mg(2+) as cofactor.

It is found in the cytoplasm. It carries out the reaction IMP + L-aspartate + GTP = N(6)-(1,2-dicarboxyethyl)-AMP + GDP + phosphate + 2 H(+). It participates in purine metabolism; AMP biosynthesis via de novo pathway; AMP from IMP: step 1/2. In terms of biological role, plays an important role in the salvage pathway for purine nucleotide biosynthesis. Catalyzes the first committed step in the biosynthesis of AMP from IMP. The protein is Adenylosuccinate synthetase of Babesia bovis.